A 247-amino-acid chain; its full sequence is Serine/threonine-protein phosphatase 2A activator (247 aa).

It belongs to the PTPA-type PPIase family.

It is found in the cytoplasm. The catalysed reaction is [protein]-peptidylproline (omega=180) = [protein]-peptidylproline (omega=0). In terms of biological role, PPIases accelerate the folding of proteins. It catalyzes the cis-trans isomerization of proline imidic peptide bonds in oligopeptides. Acts as a regulatory subunit for PP2A-like phosphatases modulating their activity or substrate specificity, probably by inducing a conformational change in the catalytic subunit, a direct target of the PPIase. Can reactivate inactive phosphatase PP2A-phosphatase methylesterase complexes (PP2Ai) in presence of ATP and Mg(2+) by dissociating the inactive form from the complex. The chain is Serine/threonine-protein phosphatase 2A activator from Encephalitozoon cuniculi (strain GB-M1) (Microsporidian parasite).